The sequence spans 615 residues: MPKRRAGFRKGWYARQRNSLTHQMQRMTLSEPTSELPTQRQIEALMPYAWNEAHVQPPVTPTNILIMLLLLLQRVQNGAAAAFWAYIPDPPMIQSLGWDREIVPVYVNDTSLLGGKSDIHISPQQANISFYGLTTQYPMCFSYQSQHPHCIQVSADISYPRVTISGIDEKTGKKSYGNGTGPLDIPFCDKHLSIGIGIDTPWTLCRARVASVYNINNANATFLWDWAPGGTPDFPEYRGQHPPIFSVNTAPIYQTELWKLLAAFGHGNSLYLQPNISGTKYGDVGVTGFLYPRACVPYPFMLIQGHMEITLSLNIYHLNCSNCILTNCIRGVAKGEQVIIVKQPAFVMLPVEIAEAWYDETALELLQRINTALSRPKRGLSLIILGIVSLITLIATAVTACVSLAQSIQAAHTVDSLSYNVTKVMGTQEDIDKKIEDRLSALYDVVRVLGEQVQSINFRMKIQCHANYKWICVTKKPYNTSDFPWDKVKKHLQGIWFNTNLSLDLLQLHNEILDIENSPKATLNIADTVDNFLQNLFSNFPSLHSLWKTLIGLGIFVIIIAIVIFVFPCVVRGLVRDFLKMRVEMLHMKYRTMLQHRHLMELLKNKERGAAGDDP.

Residues 1-84 (MPKRRAGFRK…VQNGAAAAFW (84 aa)) form the signal peptide. The Extracellular portion of the chain corresponds to 85 to 378 (AYIPDPPMIQ…INTALSRPKR (294 aa)). Residues asparagine 108, asparagine 127, asparagine 178, asparagine 219, asparagine 275, and asparagine 319 are each glycosylated (N-linked (GlcNAc...) asparagine; by host). A helical membrane pass occupies residues 379 to 402 (GLSLIILGIVSLITLIATAVTACV). The Cytoplasmic segment spans residues 403-615 (SLAQSIQAAH…KERGAAGDDP (213 aa)). Coiled-coil stretches lie at residues 411–461 (AHTV…FRMK) and 495–531 (IWFN…TVDN). The interval 590-593 (YRTM) is required for cell transformation.

As to quaternary structure, interacts with sheep HYAL2 receptor.

It localises to the virion membrane. In terms of biological role, the envelope proteins induce cell transformation leading to ovine pulmonary adenocarcinoma (OPA), a contagious lung cancer of sheep and goat. They bind to the HYAL2 receptor for cell entry. Env proteins probably do not act as oncogenes by themselves, but may rather liberate an oncogenic factor that would normally be negatively regulated. One mechanism of transformation seems to involve activation of the phosphoinositide-3-OH kinase (PI3K)/Akt pathway but does not involve the virus receptor HYAL2, and the other seems to involve Env binding to HYAL2, HYAL2 degradation, and activation of the MST1R receptor tyrosine kinase, which is normally suppressed by HYAL2. This chain is Envelope glycoprotein (env), found in Ovis aries (Sheep).